Consider the following 497-residue polypeptide: Lysine--tRNA ligase (497 aa).

The Mg(2+) site is built by E409 and E416.

The protein belongs to the class-II aminoacyl-tRNA synthetase family. Homodimer. Requires Mg(2+) as cofactor.

The protein localises to the cytoplasm. The catalysed reaction is tRNA(Lys) + L-lysine + ATP = L-lysyl-tRNA(Lys) + AMP + diphosphate. This chain is Lysine--tRNA ligase, found in Streptococcus pyogenes serotype M3 (strain ATCC BAA-595 / MGAS315).